Consider the following 41-residue polypeptide: Large ribosomal subunit protein bL36 (41 aa).

Belongs to the bacterial ribosomal protein bL36 family.

This chain is Large ribosomal subunit protein bL36, found in Ruegeria pomeroyi (strain ATCC 700808 / DSM 15171 / DSS-3) (Silicibacter pomeroyi).